The sequence spans 251 residues: 3-deoxy-manno-octulosonate cytidylyltransferase (251 aa).

It belongs to the KdsB family.

The protein localises to the cytoplasm. The catalysed reaction is 3-deoxy-alpha-D-manno-oct-2-ulosonate + CTP = CMP-3-deoxy-beta-D-manno-octulosonate + diphosphate. The protein operates within nucleotide-sugar biosynthesis; CMP-3-deoxy-D-manno-octulosonate biosynthesis; CMP-3-deoxy-D-manno-octulosonate from 3-deoxy-D-manno-octulosonate and CTP: step 1/1. Its pathway is bacterial outer membrane biogenesis; lipopolysaccharide biosynthesis. Activates KDO (a required 8-carbon sugar) for incorporation into bacterial lipopolysaccharide in Gram-negative bacteria. The polypeptide is 3-deoxy-manno-octulosonate cytidylyltransferase (Rhizobium leguminosarum bv. trifolii (strain WSM2304)).